The following is a 326-amino-acid chain: Microtubule-associated protein RP/EB family member 2 (326 aa).

The residue at position 9 (serine 9) is a Phosphoserine. The Calponin-homology (CH) domain maps to 56–158 (TMSRHDIIAW…FIQWFKKFYD (103 aa)). A Phosphotyrosine modification is found at tyrosine 166. 2 disordered regions span residues 170-239 (EARQ…DKDL) and 297-326 (YASD…QEEY). Residues 186 to 326 (QIFNLPKKSH…DQQPQQQEEY (141 aa)) form a DCTN1-binding region. Low complexity predominate over residues 199-233 (SPTAGAAKSSPAAKPGSTPSRPSSAKRASSSGSAS). Residues serine 218 and serine 235 each carry the phosphoserine modification. In terms of domain architecture, EB1 C-terminal spans 235–305 (SDKDLETQVI…LYASDEQEGQ (71 aa)). The APC-binding stretch occupies residues 258–301 (EGVEKERDFYFGKLREIELLCQEHGQENDDLVQRLMEVLYASDE). Residues 300–312 (DEQEGQTEEPEVE) are compositionally biased toward acidic residues. Positions 317–326 (DQQPQQQEEY) are enriched in low complexity.

Belongs to the MAPRE family. Interacts with DCTN1. Interacts with APC (via C-terminal). Interacts with monomeric and polymerized tubulin. Interacts with SLAIN1. Interacts (via the N-terminal region) with BAG1. Interacts with ASB14. Interacts with HAX1; this interaction is essential for epidermal cell migration. In terms of processing, phosphorylated at Ser-235 by CK2 leading to enhanced cell adhesion. Phosphorylated by CDK1 and AURKB during mitosis reduces the binding affinity of MAPRE2 for microtubules. Ubiquitinated in an ASB14-dependent manner; leading to proteasomal degradation.

Its subcellular location is the cytoplasm. It localises to the cytoskeleton. Functionally, adapter protein that is involved in microtubule polymerization, and spindle function by stabilizing microtubules and anchoring them at centrosomes. Therefore, ensures mitotic progression and genome stability. Acts as a central regulator of microtubule reorganization in apico-basal epithelial differentiation. Plays a role during oocyte meiosis by regulating microtubule dynamics. Participates in neurite growth by interacting with plexin B3/PLXNB3 and microtubule reorganization during apico-basal epithelial differentiation. Also plays an essential role for cell migration and focal adhesion dynamics. Mechanistically, recruits HAX1 to microtubules in order to regulate focal adhesion dynamics. This Rattus norvegicus (Rat) protein is Microtubule-associated protein RP/EB family member 2 (Mapre2).